A 382-amino-acid polypeptide reads, in one-letter code: ADP,ATP carrier protein, mitochondrial (382 aa).

A mitochondrion-targeting transit peptide spans 1–71; sequence MAEQANQPTV…PMMSSSPIFA (71 aa). 3 Solcar repeats span residues 80-173, 185-277, and 285-371; these read KNFM…FKRL, KWFG…LKPV, and DNFF…LQIL. A run of 5 helical transmembrane segments spans residues 82–109, 150–174, 183–203, 253–274, and 288–308; these read FMID…VKLL, TANV…KRLF, YWKW…SSLF, FNIS…YDSL, and FASF…SYPI. Residues R155 and K167 each contribute to the ADP site. Residue R312 coordinates ADP. The tract at residues 312–317 is important for transport activity; the sequence is RRRMMM. The Nucleotide carrier signature motif motif lies at 312 to 317; that stretch reads RRRMMM. The chain crosses the membrane as a helical span at residues 348–368; it reads AGANILRAIAGAGVLSGYDQL.

The protein belongs to the mitochondrial carrier (TC 2.A.29) family. In terms of assembly, monomer.

Its subcellular location is the mitochondrion inner membrane. It catalyses the reaction ADP(in) + ATP(out) = ADP(out) + ATP(in). Its activity is regulated as follows. The matrix-open state (m-state) is inhibited by the membrane-permeable bongkrekic acid (BKA). The cytoplasmic-open state (c-state) is inhibited by the membrane-impermeable toxic inhibitor carboxyatractyloside (CATR). Its function is as follows. ADP:ATP antiporter that mediates import of ADP into the mitochondrial matrix for ATP synthesis, and export of ATP out to fuel the cell. Cycles between the cytoplasmic-open state (c-state) and the matrix-open state (m-state): operates by the alternating access mechanism with a single substrate-binding site intermittently exposed to either the cytosolic (c-state) or matrix (m-state) side of the inner mitochondrial membrane. The protein is ADP,ATP carrier protein, mitochondrial of Oryza sativa subsp. japonica (Rice).